Reading from the N-terminus, the 101-residue chain is MSRLELGKEAVALLTLYEEGVKSLAIVDTLRSARQEQYRKHRMPWFLLQTRLQVRVIESAQLGMLPMPIPELLKEAVAVQPLNLNGIAHSSSSINSFLLFE.

The protein resides in the mitochondrion. This is an uncharacterized protein from Arabidopsis thaliana (Mouse-ear cress).